We begin with the raw amino-acid sequence, 57 residues long: Putative secreted protein ML2569.1 (57 aa).

A signal peptide spans 1–32 (MSRIVAPAAASVVVGLLLGAATIFGMTLMVQQ). Residues 34–57 (TKPPLPGGDPQSSVLNRVEYGNRT) are disordered.

The polypeptide is Putative secreted protein ML2569.1 (Mycobacterium leprae (strain TN)).